Consider the following 357-residue polypeptide: Fructose-bisphosphate aldolase, cytoplasmic isozyme 1 (357 aa).

Residues Arg-52 and Lys-142 each coordinate substrate. Catalysis depends on Glu-183, which acts as the Proton acceptor. Lys-225 functions as the Schiff-base intermediate with dihydroxyacetone-P in the catalytic mechanism.

Belongs to the class I fructose-bisphosphate aldolase family.

It is found in the cytoplasm. It catalyses the reaction beta-D-fructose 1,6-bisphosphate = D-glyceraldehyde 3-phosphate + dihydroxyacetone phosphate. Its pathway is carbohydrate degradation; glycolysis; D-glyceraldehyde 3-phosphate and glycerone phosphate from D-glucose: step 4/4. The chain is Fructose-bisphosphate aldolase, cytoplasmic isozyme 1 from Pisum sativum (Garden pea).